A 104-amino-acid chain; its full sequence is SOSS complex subunit C (104 aa).

A2 bears the N-acetylalanine mark.

Belongs to the SOSS-C family. In terms of assembly, component of the SOSS complex, composed of SOSS-B (SOSS-B1/NABP2 or SOSS-B2/NABP1), SOSS-A/INTS3 and SOSS-C/INIP. SOSS complexes containing SOSS-B1/NABP2 are more abundant than complexes containing SOSS-B2/NABP1. Interacts with INTS3; the interaction is direct.

It is found in the nucleus. Component of the SOSS complex, a multiprotein complex that functions downstream of the MRN complex to promote DNA repair and G2/M checkpoint. The SOSS complex associates with single-stranded DNA at DNA lesions and influences diverse endpoints in the cellular DNA damage response including cell-cycle checkpoint activation, recombinational repair and maintenance of genomic stability. Required for efficient homologous recombination-dependent repair of double-strand breaks (DSBs) and ATM-dependent signaling pathways. This Bos taurus (Bovine) protein is SOSS complex subunit C (INIP).